Here is a 4743-residue protein sequence, read N- to C-terminus: Apolipoprotein B-100 (4743 aa).

The N-terminal stretch at 1-27 (MGPQRPALRAPLLLLFLLLFLDTSVWA) is a signal peptide. The tract at residues 29–113 (DATRFKHLRK…KNSEEFASAM (85 aa)) is heparin-binding. The region spanning 33-660 (FKHLRKYVYS…PSSYLPKESM (628 aa)) is the Vitellogenin domain. A disulfide bond links Cys-65 and Cys-84. Residue Asn-172 is glycosylated (N-linked (GlcNAc...) asparagine). Disulfide bonds link Cys-173-Cys-199, Cys-232-Cys-248, Cys-372-Cys-377, and Cys-466-Cys-501. Positions 219 to 293 (VRPLSTLISS…RFFRGGINQV (75 aa)) are heparin-binding. Positions 890 to 947 (NTNFFHESGLEARVALKAGQLKVIIPSPKRPVKLFSGSNTLHLVSTTKTEVIPPLIEN) are heparin-binding. The cysteines at positions 954 and 964 are disulfide-linked. 4 N-linked (GlcNAc...) asparagine glycosylation sites follow: Asn-971, Asn-1336, Asn-1345, and Asn-1491. N6-acetyllysine is present on Lys-1973. The residue at position 2006 (Ser-2006) is a Phosphoserine. Residues 2010-2145 (NDAFDEPREF…EKLSQLETYA (136 aa)) form a heparin-binding region. N-linked (GlcNAc...) asparagine glycosylation is found at Asn-2094, Asn-2522, Asn-2662, Asn-2741, Asn-2791, Asn-2897, Asn-2944, and Asn-3063. Residues 3123-3198 (FLKTTKQSFD…KIKFDKYKTE (76 aa)) are heparin-binding. The segment at 3136 to 3146 (KAQYKKNRDKH) is basic (possible receptor binding region). 3 N-linked (GlcNAc...) asparagine glycosylation sites follow: Asn-3186, Asn-3299, and Asn-3321. The tract at residues 3336–3356 (VTDALQYKLEGTSRLMRKKVL) is LDL receptor binding. Residues 3346–3479 (GTSRLMRKKV…QEYSGSVANE (134 aa)) form a heparin-binding region. Residues 3349-3357 (RLMRKKVLK) form a basic (possible receptor binding region) region. 3 N-linked (GlcNAc...) asparagine glycosylation sites follow: Asn-3428, Asn-3715, and Asn-3828. Ser-3981 is modified (phosphoserine). The residue at position 3985 (Thr-3985) is a Phosphothreonine. 2 N-linked (GlcNAc...) asparagine glycosylation sites follow: Asn-4203 and Asn-4232.

As to quaternary structure, interacts with PCSK9. Interacts with MTTP. Interacts with AUP1. Interacts with CIDEB. In terms of processing, palmitoylated; structural requirement for proper assembly of the hydrophobic core of the lipoprotein particle. Detected in intestine and liver (at protein level).

Its subcellular location is the cytoplasm. The protein resides in the secreted. It localises to the lipid droplet. Its function is as follows. Apolipoprotein B is a major protein constituent of chylomicrons (apo B-48), LDL (apo B-100) and VLDL (apo B-100). Apo B-100 functions as a recognition signal for the cellular binding and internalization of LDL particles by the apoB/E receptor. This Rattus norvegicus (Rat) protein is Apolipoprotein B-100 (Apob).